The following is a 141-amino-acid chain: SsrA-binding protein (141 aa).

The protein belongs to the SmpB family.

It localises to the cytoplasm. Functionally, required for rescue of stalled ribosomes mediated by trans-translation. Binds to transfer-messenger RNA (tmRNA), required for stable association of tmRNA with ribosomes. tmRNA and SmpB together mimic tRNA shape, replacing the anticodon stem-loop with SmpB. tmRNA is encoded by the ssrA gene; the 2 termini fold to resemble tRNA(Ala) and it encodes a 'tag peptide', a short internal open reading frame. During trans-translation Ala-aminoacylated tmRNA acts like a tRNA, entering the A-site of stalled ribosomes, displacing the stalled mRNA. The ribosome then switches to translate the ORF on the tmRNA; the nascent peptide is terminated with the 'tag peptide' encoded by the tmRNA and targeted for degradation. The ribosome is freed to recommence translation, which seems to be the essential function of trans-translation. This Ureaplasma parvum serovar 3 (strain ATCC 27815 / 27 / NCTC 11736) protein is SsrA-binding protein.